The following is a 339-amino-acid chain: tRNA (cytidine(56)-2'-O)-methyltransferase (339 aa).

Residues leucine 79 and 105-109 each bind S-adenosyl-L-methionine; that span reads GSEKV. In terms of domain architecture, HD spans 188–295; it reads LIEHVKAVEG…VAQADNLFAG (108 aa).

Belongs to the aTrm56 family. As to quaternary structure, homodimer.

It is found in the cytoplasm. It carries out the reaction cytidine(56) in tRNA + S-adenosyl-L-methionine = 2'-O-methylcytidine(56) in tRNA + S-adenosyl-L-homocysteine + H(+). Specifically catalyzes the AdoMet-dependent 2'-O-ribose methylation of cytidine at position 56 in tRNAs. The protein is tRNA (cytidine(56)-2'-O)-methyltransferase of Thermoplasma acidophilum (strain ATCC 25905 / DSM 1728 / JCM 9062 / NBRC 15155 / AMRC-C165).